The chain runs to 261 residues: Small ribosomal subunit protein mS23 (261 aa).

Residues 234–261 are disordered; it reads NPSESWATDEKDPKKNDDIEEDVEEIKL. Residues 241–250 are compositionally biased toward basic and acidic residues; sequence TDEKDPKKND. Over residues 251–261 the composition is skewed to acidic residues; sequence DIEEDVEEIKL.

The protein belongs to the mitochondrion-specific ribosomal protein mS23 family. As to quaternary structure, component of the mitochondrial small ribosomal subunit.

It localises to the mitochondrion. In Vanderwaltozyma polyspora (strain ATCC 22028 / DSM 70294 / BCRC 21397 / CBS 2163 / NBRC 10782 / NRRL Y-8283 / UCD 57-17) (Kluyveromyces polysporus), this protein is Small ribosomal subunit protein mS23 (RSM25).